Consider the following 152-residue polypeptide: UPF0266 membrane protein YobD (152 aa).

3 helical membrane passes run 6–26 (LVLI…QFIM), 45–65 (VDSV…VTSH), and 67–87 (AQMT…IFWI).

It belongs to the UPF0266 family.

The protein localises to the cell inner membrane. The polypeptide is UPF0266 membrane protein YobD (Salmonella paratyphi B (strain ATCC BAA-1250 / SPB7)).